The sequence spans 123 residues: Alpha-lactalbumin (123 aa).

The region spanning 1 to 123 (KQFTKCELSQ…KLEQWLCEKE (123 aa)) is the C-type lysozyme domain. 4 cysteine pairs are disulfide-bonded: cysteine 6–cysteine 120, cysteine 28–cysteine 111, cysteine 61–cysteine 77, and cysteine 73–cysteine 91. Residue asparagine 45 is glycosylated (N-linked (GlcNAc...) asparagine). 5 residues coordinate Ca(2+): lysine 79, aspartate 82, aspartate 84, aspartate 87, and aspartate 88.

It belongs to the glycosyl hydrolase 22 family. In terms of assembly, lactose synthase (LS) is a heterodimer of a catalytic component, beta1,4-galactosyltransferase (beta4Gal-T1) and a regulatory component, alpha-lactalbumin (LA). As to expression, mammary gland specific. Secreted in milk.

It localises to the secreted. In terms of biological role, regulatory subunit of lactose synthase, changes the substrate specificity of galactosyltransferase in the mammary gland making glucose a good acceptor substrate for this enzyme. This enables LS to synthesize lactose, the major carbohydrate component of milk. In other tissues, galactosyltransferase transfers galactose onto the N-acetylglucosamine of the oligosaccharide chains in glycoproteins. The protein is Alpha-lactalbumin (LALBA) of Papio cynocephalus (Yellow baboon).